The sequence spans 497 residues: Di-/tripeptide transporter (497 aa).

The Cytoplasmic segment spans residues 1–36; it reads MQNLNKTEKTFFGQPRGLLTLFQTEFWERFSYYGMR. The chain crosses the membrane as a helical span at residues 37–55; sequence AILVYYLYALTTADNAGLG. At 56-64 the chain is on the extracellular side; it reads LPKAQAMAI. Residues 65–83 traverse the membrane as a helical segment; the sequence is VSIYGALVYLSTIVGGWVA. Residues 84–92 lie on the Cytoplasmic side of the membrane; the sequence is DRLLGASRT. The helical transmembrane segment at 93 to 111 threads the bilayer; it reads IFLGGILITLGHIALATPF. The Extracellular portion of the chain corresponds to 112-115; it reads GLSS. The chain crosses the membrane as a helical span at residues 116-134; that stretch reads LFVALFLIILGTGMLKPNI. Residues 135–154 are Cytoplasmic-facing; it reads SNMVGHLYSKDDSRRDTGFN. Residues 155–173 form a helical membrane-spanning segment; that stretch reads IFVVGINMGSLIAPLIVGT. Topologically, residues 174-181 are extracellular; the sequence is VGQGVNYH. A helical transmembrane segment spans residues 182–200; that stretch reads LGFSLAAIGMIFALFAYWY. Over 201–224 the chain is Cytoplasmic; that stretch reads GRLRHFPEIGREPSNPMDSKARRN. The helical transmembrane segment at 225–243 threads the bilayer; the sequence is FLITLTIVVIVAIIGFFLL. The Extracellular portion of the chain corresponds to 244–254; that stretch reads YQASPANFINN. Residues 255-273 traverse the membrane as a helical segment; that stretch reads FINVLSIIGIVVPIIYFVM. The Cytoplasmic portion of the chain corresponds to 274 to 293; the sequence is MFTSKKVESDERRKLTAYIP. The helical transmembrane segment at 294-312 threads the bilayer; the sequence is LFLSAIVFWAIEEQSSTII. The Extracellular portion of the chain corresponds to 313–335; it reads AVWGESRSNLDPTWFGITFHIDP. The chain crosses the membrane as a helical span at residues 336–354; it reads SWYQLLNPLFIVLLSPIFV. At 355-372 the chain is on the cytoplasmic side; that stretch reads RLWNKLGERQPSTIVKFG. The chain crosses the membrane as a helical span at residues 373–391; sequence LGLMLTGISYLIMTLPGLL. At 392-425 the chain is on the extracellular side; it reads NGTSGRASALWLVLMFAVQMAGELLVSPVGLSVS. A helical membrane pass occupies residues 426 to 444; sequence TKLAPVAFQSQMMAMWFLA. The Cytoplasmic segment spans residues 445-497; sequence DSTSQAINAQITPLFKAATEVHFFAITGIIGIIVGIILLIVKKPILKLMGDVR.

The protein belongs to the major facilitator superfamily. Proton-dependent oligopeptide transporter (POT/PTR) (TC 2.A.17) family.

It is found in the cell membrane. Functionally, proton-dependent uptake of di- or tri-peptides. The sequence is that of Di-/tripeptide transporter (dtpT) from Lactococcus lactis subsp. lactis (strain IL1403) (Streptococcus lactis).